A 431-amino-acid chain; its full sequence is Levansucrase LscC (431 aa).

Sucrose is bound by residues Trp61, Asp62, Ala148, Arg218, and Asp219. Asp62 serves as the catalytic Nucleophile. The active-site Proton donor/acceptor is the Glu303.

The protein belongs to the glycosyl hydrolase 68 family.

The protein resides in the periplasm. It carries out the reaction [6)-beta-D-fructofuranosyl-(2-&gt;](n) alpha-D-glucopyranoside + sucrose = [6)-beta-D-fructofuranosyl-(2-&gt;](n+1) alpha-D-glucopyranoside + D-glucose. Its function is as follows. Catalyzes the synthesis of levan, a fructose polymer, by transferring the fructosyl moiety from sucrose to a growing acceptor molecule. The sequence is that of Levansucrase LscC from Pseudomonas savastanoi pv. glycinea (Pseudomonas syringae pv. glycinea).